A 428-amino-acid chain; its full sequence is 3-phosphoshikimate 1-carboxyvinyltransferase (428 aa).

3-phosphoshikimate contacts are provided by lysine 22, serine 23, and arginine 27. Lysine 22 is a binding site for phosphoenolpyruvate. Positions 96 and 124 each coordinate phosphoenolpyruvate. Positions 170, 171, 172, 198, 314, 337, and 341 each coordinate 3-phosphoshikimate. Residue glutamine 172 participates in phosphoenolpyruvate binding. Aspartate 314 (proton acceptor) is an active-site residue. Positions 345, 387, and 412 each coordinate phosphoenolpyruvate.

It belongs to the EPSP synthase family. As to quaternary structure, monomer.

The protein localises to the cytoplasm. The catalysed reaction is 3-phosphoshikimate + phosphoenolpyruvate = 5-O-(1-carboxyvinyl)-3-phosphoshikimate + phosphate. The protein operates within metabolic intermediate biosynthesis; chorismate biosynthesis; chorismate from D-erythrose 4-phosphate and phosphoenolpyruvate: step 6/7. Its function is as follows. Catalyzes the transfer of the enolpyruvyl moiety of phosphoenolpyruvate (PEP) to the 5-hydroxyl of shikimate-3-phosphate (S3P) to produce enolpyruvyl shikimate-3-phosphate and inorganic phosphate. The sequence is that of 3-phosphoshikimate 1-carboxyvinyltransferase from Vibrio vulnificus (strain YJ016).